A 388-amino-acid polypeptide reads, in one-letter code: Probable proton-coupled zinc antiporter SLC30A3 (388 aa).

Positions 1 to 41 (MEPSLATGGSETTRLVSARDRSSAGGGLRLKSLFTEPSEPL) are disordered. Topologically, residues 1–75 (MEPSLATGGS…SPERVQARRQ (75 aa)) are cytoplasmic. 2 positions are modified to phosphoserine: serine 63 and serine 66. Residues 76–96 (LYAACAVCFIFMAGEVVGGYL) form a helical membrane-spanning segment. The Lumenal portion of the chain corresponds to 97–105 (AHSLAIMTD). The chain crosses the membrane as a helical span at residues 106-126 (AAHLLADIGSMLASLFSLWLS). Zn(2+) contacts are provided by histidine 108 and aspartate 112. Over 127 to 145 (TRPATRTMTFGWHRSETLG) the chain is Cytoplasmic. Residues 146–166 (ALASVVSLWIVTGILLYLAFL) traverse the membrane as a helical segment. The Lumenal portion of the chain corresponds to 167–177 (RLLHSDYHIEA). Residues 178-198 (GAMLLTASIAVCANLLMAFVL) traverse the membrane as a helical segment. The Cytoplasmic segment spans residues 199–235 (HQTGAPHSHGSTGAEYAPLEEGHGYPMSLGNTSVRAA). A helical transmembrane segment spans residues 236 to 256 (FVHVLGDLLQSFGVLAASILI). The Zn(2+) site is built by histidine 238 and aspartate 242. The Lumenal portion of the chain corresponds to 257 to 263 (YFKPQYK). The helical transmembrane segment at 264-284 (VADPISTFLFSICALGSTAPT) threads the bilayer. Residues 285–388 (LRDVLLVLME…CLRCQEPSQA (104 aa)) are Cytoplasmic-facing.

This sequence belongs to the cation diffusion facilitator (CDF) transporter (TC 2.A.4) family. SLC30A subfamily. Homodimer. Homodimerization is negligible compared to the human protein. It could explain the lower efficiency of zinc transport. Interacts with TMEM163. In terms of tissue distribution, expression is restricted to brain (at protein level). In the brain, most abundant in hippocampus and cerebral cortex. The mRNA is also detected in testis, expression being restricted to germ cells and highest in pachytene spermatocytes and round spermatids.

It is found in the cytoplasmic vesicle. The protein resides in the secretory vesicle. It localises to the synaptic vesicle membrane. Its subcellular location is the synapse. The protein localises to the synaptosome. It is found in the late endosome membrane. The protein resides in the lysosome membrane. It catalyses the reaction Zn(2+)(in) + 2 H(+)(out) = Zn(2+)(out) + 2 H(+)(in). Probable proton-coupled zinc ion antiporter mediating the import of zinc from cytoplasm into synaptic vesicles and participating to cellular zinc ion homeostasis in the brain. The sequence is that of Probable proton-coupled zinc antiporter SLC30A3 from Mus musculus (Mouse).